The sequence spans 78 residues: Acyl carrier protein (78 aa).

Residues serine 2–serine 77 form the Carrier domain. Serine 37 is modified (O-(pantetheine 4'-phosphoryl)serine).

This sequence belongs to the acyl carrier protein (ACP) family. 4'-phosphopantetheine is transferred from CoA to a specific serine of apo-ACP by AcpS. This modification is essential for activity because fatty acids are bound in thioester linkage to the sulfhydryl of the prosthetic group.

The protein resides in the cytoplasm. Its pathway is lipid metabolism; fatty acid biosynthesis. Functionally, carrier of the growing fatty acid chain in fatty acid biosynthesis. This Bartonella henselae (strain ATCC 49882 / DSM 28221 / CCUG 30454 / Houston 1) (Rochalimaea henselae) protein is Acyl carrier protein.